A 249-amino-acid polypeptide reads, in one-letter code: MSVKKQLERLSELGAYYHKNGWMPGTAGNLSIRIPEESGFWVSGSGLDKNLLNKRNFLYVDLESGKPVDSKNIKATKGLKPSAETSIHRAVYRALDGVGCGLHVHTLESNLICANTSKNEPIVLFELPAIEILKAYGIWEENPKVYVPIIYNFPNVQDISDCLEKYLKEYRPHVPFCIIEKHGITVWGKDAVQANRNLEATDFILKYMTSWKSFSYSGEPRKLSVSDVLGQDRREIFSVEFPVYPATFY.

Residues His-103 and His-105 each contribute to the Zn(2+) site.

The protein belongs to the aldolase class II family. MtnB subfamily. Zn(2+) is required as a cofactor.

It catalyses the reaction 5-(methylsulfanyl)-D-ribulose 1-phosphate = 5-methylsulfanyl-2,3-dioxopentyl phosphate + H2O. The protein operates within amino-acid biosynthesis; L-methionine biosynthesis via salvage pathway; L-methionine from S-methyl-5-thio-alpha-D-ribose 1-phosphate: step 2/6. Its function is as follows. Catalyzes the dehydration of methylthioribulose-1-phosphate (MTRu-1-P) into 2,3-diketo-5-methylthiopentyl-1-phosphate (DK-MTP-1-P). This is Methylthioribulose-1-phosphate dehydratase from Leptospira interrogans serogroup Icterohaemorrhagiae serovar Lai (strain 56601).